The chain runs to 133 residues: Ribosomal silencing factor RsfS (133 aa).

It belongs to the Iojap/RsfS family. Interacts with ribosomal protein uL14 (rplN).

Its subcellular location is the cytoplasm. In terms of biological role, functions as a ribosomal silencing factor. Interacts with ribosomal protein uL14 (rplN), blocking formation of intersubunit bridge B8. Prevents association of the 30S and 50S ribosomal subunits and the formation of functional ribosomes, thus repressing translation. This chain is Ribosomal silencing factor RsfS, found in Zymomonas mobilis subsp. mobilis (strain ATCC 31821 / ZM4 / CP4).